The chain runs to 249 residues: Acetylglutamate kinase (249 aa).

Substrate contacts are provided by residues 38 to 39 (GG), Arg-60, and Asn-147.

The protein belongs to the acetylglutamate kinase family. ArgB subfamily.

The protein resides in the cytoplasm. The catalysed reaction is N-acetyl-L-glutamate + ATP = N-acetyl-L-glutamyl 5-phosphate + ADP. It functions in the pathway amino-acid biosynthesis; L-arginine biosynthesis; N(2)-acetyl-L-ornithine from L-glutamate: step 2/4. In terms of biological role, catalyzes the ATP-dependent phosphorylation of N-acetyl-L-glutamate. In Deinococcus radiodurans (strain ATCC 13939 / DSM 20539 / JCM 16871 / CCUG 27074 / LMG 4051 / NBRC 15346 / NCIMB 9279 / VKM B-1422 / R1), this protein is Acetylglutamate kinase.